The chain runs to 27 residues: LCLSCRGGDYDCRVKGTCENGKCVCGS.

3 cysteine pairs are disulfide-bonded: cysteine 2–cysteine 23, cysteine 5–cysteine 18, and cysteine 12–cysteine 25.

As to expression, expressed by the venom gland.

The protein resides in the secreted. In Centruroides noxius (Mexican scorpion), this protein is Peptide Cn29.